Here is a 438-residue protein sequence, read N- to C-terminus: V-type ATP synthase beta chain (438 aa).

Belongs to the ATPase alpha/beta chains family.

Functionally, produces ATP from ADP in the presence of a proton gradient across the membrane. The V-type beta chain is a regulatory subunit. The chain is V-type ATP synthase beta chain from Chlamydia trachomatis serovar L2b (strain UCH-1/proctitis).